We begin with the raw amino-acid sequence, 620 residues long: Toxin coregulated pilus biosynthesis protein I (620 aa).

Residues 344-580 (TMNDLSIKQT…DVAKQMEDIR (237 aa)) form the Methyl-accepting transducer domain.

This sequence belongs to the methyl-accepting chemotaxis (MCP) protein family.

The protein localises to the cell inner membrane. Its function is as follows. May function as an environmental regulator of TCP biogenesis. Negatively regulates the synthesis of the major pilin subunit of TCP (TcpA). In Vibrio cholerae serotype O1 (strain ATCC 39541 / Classical Ogawa 395 / O395), this protein is Toxin coregulated pilus biosynthesis protein I (tcpI).